The sequence spans 435 residues: MSIITDVYAREVLDSRGNPTLEVEVYTESGAFGRGMVPSGASTGEHEAVELRDGDKSRYLGLGTQKAVDNVNNVIADAIIGFDVRDQQAIDRAMIALDGTPNKGKLGANAILGVSIAVARAAADYLEVPLYTYLGGFNTKVLPTPMMNIINGGSHSDAPIAFQEFMILPVGAPSFKEGLRWGAEVFHALKKILKARGLVTAVGDEGGFAPKFEGTEDGVETIIEAIEAAGYEAGENGIMIGFDCASSEFYDKERKVYDYTKFEGEGAAVRTSAEQIDYLEELVNKYPIITIEDGMDENDWDGWKALTERLGKRVQLVGDDFFVTNTDYLARGIKEGAANSILIKVNQIGTLTETFEAIEMAKEAGYTAVVSHRSGETEDSTIADIAVATNAGQIKTGSLSRTDRIAKYNQLLRIEDQLGEVAVYKGLNSFYNLKK.

Q163 provides a ligand contact to (2R)-2-phosphoglycerate. The active-site Proton donor is E205. Mg(2+)-binding residues include D243, E292, and D319. Residues K344, R373, S374, and K395 each contribute to the (2R)-2-phosphoglycerate site. The active-site Proton acceptor is K344.

The protein belongs to the enolase family. Mg(2+) is required as a cofactor.

It is found in the cytoplasm. It localises to the secreted. The protein resides in the cell surface. The catalysed reaction is (2R)-2-phosphoglycerate = phosphoenolpyruvate + H2O. It participates in carbohydrate degradation; glycolysis; pyruvate from D-glyceraldehyde 3-phosphate: step 4/5. Functionally, catalyzes the reversible conversion of 2-phosphoglycerate (2-PG) into phosphoenolpyruvate (PEP). It is essential for the degradation of carbohydrates via glycolysis. The sequence is that of Enolase from Streptococcus suis (strain 98HAH33).